The chain runs to 396 residues: S-adenosylmethionine synthase (396 aa).

Histidine 15 contacts ATP. Aspartate 17 lines the Mg(2+) pocket. Glutamate 43 is a K(+) binding site. Glutamate 56 and glutamine 99 together coordinate L-methionine. Positions 99–109 are flexible loop; sequence QSSDIAMGVDK. Residues 175 to 177, 241 to 242, aspartate 250, 256 to 257, alanine 273, and lysine 277 each bind ATP; these read DGK, RF, and RK. Aspartate 250 is an L-methionine binding site. Lysine 281 provides a ligand contact to L-methionine.

This sequence belongs to the AdoMet synthase family. Homotetramer; dimer of dimers. Mg(2+) serves as cofactor. It depends on K(+) as a cofactor.

It localises to the cytoplasm. It carries out the reaction L-methionine + ATP + H2O = S-adenosyl-L-methionine + phosphate + diphosphate. Its pathway is amino-acid biosynthesis; S-adenosyl-L-methionine biosynthesis; S-adenosyl-L-methionine from L-methionine: step 1/1. In terms of biological role, catalyzes the formation of S-adenosylmethionine (AdoMet) from methionine and ATP. The overall synthetic reaction is composed of two sequential steps, AdoMet formation and the subsequent tripolyphosphate hydrolysis which occurs prior to release of AdoMet from the enzyme. The protein is S-adenosylmethionine synthase of Ruminiclostridium cellulolyticum (strain ATCC 35319 / DSM 5812 / JCM 6584 / H10) (Clostridium cellulolyticum).